A 337-amino-acid polypeptide reads, in one-letter code: 2-oxoglutarate-dependent dioxygenase 19 (337 aa).

Residues 1 to 25 (MVAPSRLPSHEEQSAAAAADGSATP) are disordered. One can recognise a Fe2OG dioxygenase domain in the interval 179 to 283 (NLESCFQILV…RMSFVSLIGP (105 aa)). Fe cation-binding residues include His208, Asp210, and His264. Arg274 contacts 2-oxoglutarate.

This sequence belongs to the iron/ascorbate-dependent oxidoreductase family. The cofactor is Fe(2+). L-ascorbate serves as cofactor. In terms of tissue distribution, expressed in shoots.

The protein localises to the cytoplasm. The enzyme catalyses melatonin + 2-oxoglutarate + O2 = 2-hydroxymelatonin + succinate + CO2. Involved in melatonin degradation. Catalyzes the hydroxylation of melatonin to produce 2-hydroxymelatonin. The chain is 2-oxoglutarate-dependent dioxygenase 19 from Oryza sativa subsp. japonica (Rice).